We begin with the raw amino-acid sequence, 506 residues long: Cobyric acid synthase (506 aa).

A GATase cobBQ-type domain is found at Asp251 to Phe448. The active-site Nucleophile is Cys332. The active site involves His440.

Belongs to the CobB/CobQ family. CobQ subfamily. Homodimer.

Its pathway is cofactor biosynthesis; adenosylcobalamin biosynthesis. Functionally, catalyzes amidations at positions B, D, E, and G on adenosylcobyrinic A,C-diamide. NH(2) groups are provided by glutamine, and one molecule of ATP is hydrogenolyzed for each amidation. The protein is Cobyric acid synthase (cbiP) of Salmonella typhimurium (strain LT2 / SGSC1412 / ATCC 700720).